The primary structure comprises 692 residues: Sulfhydryl oxidase 2 (692 aa).

Positions 1–38 (MAAARAVARDPGAYARQPPSLRAARLPRLLFLLAVVAA) are cleaved as a signal peptide. One can recognise a Thioredoxin domain in the interval 54 to 172 (SDAVWLLDSG…RQTMIDFLQN (119 aa)). N71 carries N-linked (GlcNAc...) asparagine glycosylation. Catalysis depends on nucleophile residues C85 and C88. Intrachain disulfides connect C85-C88 and C116-C125. N-linked (GlcNAc...) asparagine glycans are attached at residues N172, N212, and N260. A disulfide bond links C412 and C424. The ERV/ALR sulfhydryl oxidase domain maps to 415–524 (SRLELRGYPC…EDPKFPKVPW (110 aa)). FAD-binding positions include R420, W427, H431, E472, H476, 499 to 506 (WRKHNMVN), K521, and W524. C470 and C473 are oxidised to a cystine. C530 and C533 are joined by a disulfide. The disordered stretch occupies residues 568-607 (DQGSPGEWEAQGREQEEGKGLNPSGKSWRHHDTGSLRPPH). The segment covering 577 to 586 (AQGREQEEGK) has biased composition (basic and acidic residues). The helical transmembrane segment at 656–676 (SLCVVLYVASSLFLMIMYFFF) threads the bilayer.

The protein belongs to the quiescin-sulfhydryl oxidase (QSOX) family. FAD serves as cofactor.

The protein localises to the membrane. The enzyme catalyses 2 R'C(R)SH + O2 = R'C(R)S-S(R)CR' + H2O2. Catalyzes the oxidation of sulfhydryl groups in peptide and protein thiols to disulfides with the reduction of oxygen to hydrogen peroxide. May contribute to disulfide bond formation in a variety of secreted proteins. The protein is Sulfhydryl oxidase 2 (Qsox2) of Mus musculus (Mouse).